The primary structure comprises 219 residues: Probable GTP-binding protein EngB (219 aa).

One can recognise an EngB-type G domain in the interval 26–200; sequence EGVEIAFAGR…RAKLDTWFAP (175 aa). GTP-binding positions include 34–41, 61–65, 79–82, 146–149, and 179–181; these read GRSNAGKS, GRTQL, DLPG, TKAD, and FSS. Mg(2+) contacts are provided by S41 and T63.

The protein belongs to the TRAFAC class TrmE-Era-EngA-EngB-Septin-like GTPase superfamily. EngB GTPase family. Requires Mg(2+) as cofactor.

In terms of biological role, necessary for normal cell division and for the maintenance of normal septation. In Vibrio parahaemolyticus serotype O3:K6 (strain RIMD 2210633), this protein is Probable GTP-binding protein EngB.